A 107-amino-acid chain; its full sequence is Putative antitoxin VapB5 (107 aa).

2 helical membrane passes run 3 to 23 and 65 to 85; these read GPVIIPLISTLGLSFLAILLA and LIILTPALTWSLTALSMAYLY.

The protein resides in the cell membrane. Functionally, possibly the antitoxin component of a type II toxin-antitoxin (TA) system. Its cognate toxin is VapC5 (Potential). The chain is Putative antitoxin VapB5 (vapB5) from Methanocaldococcus jannaschii (strain ATCC 43067 / DSM 2661 / JAL-1 / JCM 10045 / NBRC 100440) (Methanococcus jannaschii).